Consider the following 164-residue polypeptide: Small ribosomal subunit protein uS3m (164 aa).

The N-terminal 23 residues, M1–L23, are a transit peptide targeting the mitochondrion.

This sequence belongs to the universal ribosomal protein uS3 family. In terms of assembly, component of the mitochondrial ribosome small subunit (28S) which comprises a 12S rRNA and about 30 distinct proteins.

It is found in the mitochondrion. The chain is Small ribosomal subunit protein uS3m (mrps-24) from Caenorhabditis elegans.